We begin with the raw amino-acid sequence, 129 residues long: Small ribosomal subunit protein uS11 (129 aa).

It belongs to the universal ribosomal protein uS11 family. Part of the 30S ribosomal subunit. Interacts with proteins S7 and S18. Binds to IF-3.

Located on the platform of the 30S subunit, it bridges several disparate RNA helices of the 16S rRNA. Forms part of the Shine-Dalgarno cleft in the 70S ribosome. This is Small ribosomal subunit protein uS11 from Dechloromonas aromatica (strain RCB).